Here is a 462-residue protein sequence, read N- to C-terminus: 2-amino-5-chloromuconic acid deaminase (462 aa).

Active-site charge relay system residues include Lys79 and Ser156. Residue Ser180 is the Acyl-ester intermediate of the active site.

This sequence belongs to the amidase family.

It catalyses the reaction (2Z,4E)-2-aminomuconate + H2O = (3E)-2-oxohex-3-enedioate + NH4(+). The protein operates within xenobiotic degradation; nitrobenzene degradation. It participates in xenobiotic degradation; 4-chloronitrobenzene degradation. Involved in the biodegradation of nitroaromatic and chlorinated nitroaromatic compounds. Catalyzes the conversion of 2-amino-5-chloromuconic acid into 2-hydroxy-5-chloromuconic acid and ammonia. Also able to catalyze the transformation of 2-aminomuconic acid into 2-hydroxymuconic acid. The polypeptide is 2-amino-5-chloromuconic acid deaminase (Comamonas testosteroni (Pseudomonas testosteroni)).